A 227-amino-acid polypeptide reads, in one-letter code: MIHHIPNVLSKEQVAEFRKLMEEANWVGGKVTAGTLSASVKRNQQLSEQDPLTHHLSDIVIKAIWQNPLFQAAALPHKIIPPLFNRYDEHESFGFHVDNSIRLIRGTAEQIRTDLSCTLFLSEPDEYEGGDLVIEDTYGYHEVKLPAGDVVLYPSTSLHEVSSITAGTRFASFFWVQSLVRDDSKRHLLFSLDESIRELRKSHGDSYSEVMKLTNIYHNLIRMWSEL.

Residues 78-178 (KIIPPLFNRY…RFASFFWVQS (101 aa)) enclose the Fe2OG dioxygenase domain. Residues His96, Asp98, and His159 each contribute to the Fe cation site. Arg169 serves as a coordination point for 2-oxoglutarate.

Requires Fe(2+) as cofactor. The cofactor is L-ascorbate.

This Acinetobacter baumannii (strain SDF) protein is PKHD-type hydroxylase ABSDF3031.